A 198-amino-acid polypeptide reads, in one-letter code: Glycerol-3-phosphate acyltransferase (198 aa).

The next 4 membrane-spanning stretches (helical) occupy residues 3 to 23, 81 to 101, 113 to 133, and 153 to 175; these read VEWL…AVIV, LFAA…FFQF, VLLG…IGVA, and YVWL…MLLV.

This sequence belongs to the PlsY family. Probably interacts with PlsX.

The protein localises to the cell inner membrane. It catalyses the reaction an acyl phosphate + sn-glycerol 3-phosphate = a 1-acyl-sn-glycero-3-phosphate + phosphate. Its pathway is lipid metabolism; phospholipid metabolism. Functionally, catalyzes the transfer of an acyl group from acyl-phosphate (acyl-PO(4)) to glycerol-3-phosphate (G3P) to form lysophosphatidic acid (LPA). This enzyme utilizes acyl-phosphate as fatty acyl donor, but not acyl-CoA or acyl-ACP. The polypeptide is Glycerol-3-phosphate acyltransferase (Methylococcus capsulatus (strain ATCC 33009 / NCIMB 11132 / Bath)).